Consider the following 139-residue polypeptide: Diuretic hormone 41 (139 aa).

An N-terminal signal peptide occupies residues 1 to 20; it reads MMWWALWCAVVVAAGSGVAA. Residues 21 to 79 constitute a propeptide that is removed on maturation; sequence APAPDSLSPLDMVQMDSSAPDDETLYAMSPMAARYSAGAPWLYLLADMPRDSQTGSGRV. An Isoleucine amide modification is found at I122.

It belongs to the sauvagine/corticotropin-releasing factor/urotensin I family. Expressed in corpora cardiaca (CC), corpora allata (CA), antennal lobe (AL) and gnathal ganglion (GNG) (at protein level). Expression in CC and CA detected in all animals, in GNG in most animals, expression in AL detected in few animals (at protein level).

The protein resides in the secreted. Its function is as follows. Regulation of fluid secretion. The polypeptide is Diuretic hormone 41 (Agrotis ipsilon (Black cutworm moth)).